The chain runs to 450 residues: Phosphoglucosamine mutase (450 aa).

Ser102 (phosphoserine intermediate) is an active-site residue. Mg(2+)-binding residues include Ser102, Asp244, Asp246, and Asp248. Position 102 is a phosphoserine (Ser102).

This sequence belongs to the phosphohexose mutase family. Mg(2+) is required as a cofactor. Activated by phosphorylation.

The catalysed reaction is alpha-D-glucosamine 1-phosphate = D-glucosamine 6-phosphate. Its function is as follows. Catalyzes the conversion of glucosamine-6-phosphate to glucosamine-1-phosphate. This chain is Phosphoglucosamine mutase, found in Bartonella bacilliformis (strain ATCC 35685 / KC583 / Herrer 020/F12,63).